The following is a 435-amino-acid chain: tRNA modification GTPase MnmE (435 aa).

Residues Arg-20, Glu-77, and Lys-117 each contribute to the (6S)-5-formyl-5,6,7,8-tetrahydrofolate site. The TrmE-type G domain maps to 214 to 359 (GIKVVIVGVP…FLKEIESFCL (146 aa)). GTP is bound by residues 224-229 (NSGKSS), 243-249 (TEEEGTT), and 268-271 (DTAG). Residues Ser-228 and Thr-249 each coordinate Mg(2+). Lys-435 is a binding site for (6S)-5-formyl-5,6,7,8-tetrahydrofolate.

Belongs to the TRAFAC class TrmE-Era-EngA-EngB-Septin-like GTPase superfamily. TrmE GTPase family. Homodimer. Heterotetramer of two MnmE and two MnmG subunits. It depends on K(+) as a cofactor.

Its subcellular location is the cytoplasm. In terms of biological role, exhibits a very high intrinsic GTPase hydrolysis rate. Involved in the addition of a carboxymethylaminomethyl (cmnm) group at the wobble position (U34) of certain tRNAs, forming tRNA-cmnm(5)s(2)U34. This Bartonella bacilliformis (strain ATCC 35685 / KC583 / Herrer 020/F12,63) protein is tRNA modification GTPase MnmE.